Consider the following 334-residue polypeptide: GTPase Obg (334 aa).

The 159-residue stretch at 4 to 162 (FDFIDEVKKY…GWIKLELKLL (159 aa)) folds into the Obg domain. An OBG-type G domain is found at 163 to 330 (AEVGLVGFPN…FKDKIWKLLH (168 aa)). Residues 169–176 (GFPNAGKS), 194–198 (FTTLV), 216–219 (DMPG), 284–287 (SKLD), and 311–313 (SSV) each bind GTP. Residues S176 and T196 each contribute to the Mg(2+) site.

It belongs to the TRAFAC class OBG-HflX-like GTPase superfamily. OBG GTPase family. As to quaternary structure, monomer. Mg(2+) is required as a cofactor.

The protein localises to the cytoplasm. In terms of biological role, an essential GTPase which binds GTP, GDP and possibly (p)ppGpp with moderate affinity, with high nucleotide exchange rates and a fairly low GTP hydrolysis rate. Plays a role in control of the cell cycle, stress response, ribosome biogenesis and in those bacteria that undergo differentiation, in morphogenesis control. In Amoebophilus asiaticus (strain 5a2), this protein is GTPase Obg.